A 381-amino-acid chain; its full sequence is Queuine tRNA-ribosyltransferase (381 aa).

Aspartate 96 (proton acceptor) is an active-site residue. Substrate contacts are provided by residues 96 to 100 (DSGGF), aspartate 150, glutamine 193, and glycine 220. The segment at 251–257 (GVGSPDS) is RNA binding. Aspartate 270 functions as the Nucleophile in the catalytic mechanism. Residues 275–279 (TRIAR) form an RNA binding; important for wobble base 34 recognition region. Zn(2+) is bound by residues cysteine 308, cysteine 310, cysteine 313, and histidine 339.

This sequence belongs to the queuine tRNA-ribosyltransferase family. Homodimer. Within each dimer, one monomer is responsible for RNA recognition and catalysis, while the other monomer binds to the replacement base PreQ1. Zn(2+) is required as a cofactor.

The enzyme catalyses 7-aminomethyl-7-carbaguanine + guanosine(34) in tRNA = 7-aminomethyl-7-carbaguanosine(34) in tRNA + guanine. It participates in tRNA modification; tRNA-queuosine biosynthesis. Functionally, catalyzes the base-exchange of a guanine (G) residue with the queuine precursor 7-aminomethyl-7-deazaguanine (PreQ1) at position 34 (anticodon wobble position) in tRNAs with GU(N) anticodons (tRNA-Asp, -Asn, -His and -Tyr). Catalysis occurs through a double-displacement mechanism. The nucleophile active site attacks the C1' of nucleotide 34 to detach the guanine base from the RNA, forming a covalent enzyme-RNA intermediate. The proton acceptor active site deprotonates the incoming PreQ1, allowing a nucleophilic attack on the C1' of the ribose to form the product. After dissociation, two additional enzymatic reactions on the tRNA convert PreQ1 to queuine (Q), resulting in the hypermodified nucleoside queuosine (7-(((4,5-cis-dihydroxy-2-cyclopenten-1-yl)amino)methyl)-7-deazaguanosine). The sequence is that of Queuine tRNA-ribosyltransferase from Lysinibacillus sphaericus (strain C3-41).